Here is a 418-residue protein sequence, read N- to C-terminus: Deubiquitinase and deneddylase Dub1 (418 aa).

The span at methionine 1–lysine 10 shows a compositional bias: polar residues. The disordered stretch occupies residues methionine 1–valine 23. The helical transmembrane segment at threonine 40–phenylalanine 60 threads the bilayer. Positions serine 75–lysine 145 are disordered. The segment covering glutamate 86–proline 141 has biased composition (pro residues). Catalysis depends on residues histidine 288, aspartate 305, and cysteine 358.

This sequence belongs to the peptidase C48 family.

It is found in the secreted. Its subcellular location is the host cell. It localises to the membrane. Functionally, effector proteins function to alter host cell physiology and promote bacterial survival in host tissues. This protease possesses deubiquitinating and deneddylating activities. The sequence is that of Deubiquitinase and deneddylase Dub1 (cdu1) from Chlamydia trachomatis serovar A (strain ATCC VR-571B / DSM 19440 / HAR-13).